The following is a 367-amino-acid chain: Probable butyrate kinase (367 aa).

The protein belongs to the acetokinase family.

The protein resides in the cytoplasm. It carries out the reaction butanoate + ATP = butanoyl phosphate + ADP. The sequence is that of Probable butyrate kinase from Bacillus cereus (strain G9842).